The chain runs to 386 residues: 23S rRNA (uracil(747)-C(5))-methyltransferase RlmC (386 aa).

[4Fe-4S] cluster contacts are provided by Cys7, Cys15, Cys18, and Cys94. Gln219, Phe248, Glu269, and Asn316 together coordinate S-adenosyl-L-methionine. Residue Cys343 is the Nucleophile of the active site.

Belongs to the class I-like SAM-binding methyltransferase superfamily. RNA M5U methyltransferase family. RlmC subfamily.

The enzyme catalyses uridine(747) in 23S rRNA + S-adenosyl-L-methionine = 5-methyluridine(747) in 23S rRNA + S-adenosyl-L-homocysteine + H(+). In terms of biological role, catalyzes the formation of 5-methyl-uridine at position 747 (m5U747) in 23S rRNA. The polypeptide is 23S rRNA (uracil(747)-C(5))-methyltransferase RlmC (Shewanella oneidensis (strain ATCC 700550 / JCM 31522 / CIP 106686 / LMG 19005 / NCIMB 14063 / MR-1)).